The chain runs to 120 residues: U3-hexatoxin-Hi1a (120 aa).

The first 19 residues, 1–19 (MKLLYFFVVITVLVAVAAA), serve as a signal peptide directing secretion. Positions 20-51 (LPAKTEEQIAAEENQLVEDLVQYAGTRLTRKR) are excised as a propeptide.

It belongs to the neurotoxin 25 family. F7 subfamily. Contains 4 disulfide bonds. In terms of tissue distribution, expressed by the venom gland.

It is found in the secreted. Its function is as follows. Weak insecticidal toxin with probable ion channel impairing activity. In vivo, induces paralysis when injected into sheep blowflies (L.cuprina). Shows weak toxicity, since it is only toxic at high doses, and flies recover within 24 hours. This Hadronyche infensa (Fraser island funnel-web spider) protein is U3-hexatoxin-Hi1a.